A 307-amino-acid polypeptide reads, in one-letter code: N-acetylmuramic acid 6-phosphate etherase (307 aa).

An SIS domain is found at 62–225; that stretch reads IVAAFQKGGR…TTASMIRIGK (164 aa). E90 acts as the Proton donor in catalysis. E121 is a catalytic residue.

It belongs to the GCKR-like family. MurNAc-6-P etherase subfamily. In terms of assembly, homodimer.

The enzyme catalyses N-acetyl-D-muramate 6-phosphate + H2O = N-acetyl-D-glucosamine 6-phosphate + (R)-lactate. The protein operates within amino-sugar metabolism; 1,6-anhydro-N-acetylmuramate degradation. It functions in the pathway amino-sugar metabolism; N-acetylmuramate degradation. Its pathway is cell wall biogenesis; peptidoglycan recycling. Functionally, specifically catalyzes the cleavage of the D-lactyl ether substituent of MurNAc 6-phosphate, producing GlcNAc 6-phosphate and D-lactate. Together with AnmK, is also required for the utilization of anhydro-N-acetylmuramic acid (anhMurNAc) either imported from the medium or derived from its own cell wall murein, and thus plays a role in cell wall recycling. The sequence is that of N-acetylmuramic acid 6-phosphate etherase from Rhizobium rhizogenes (strain K84 / ATCC BAA-868) (Agrobacterium radiobacter).